A 204-amino-acid polypeptide reads, in one-letter code: Probable GTP-binding protein EngB (204 aa).

The EngB-type G domain occupies 27-201 (SGIEIAFAGR…SEKLDQWFSP (175 aa)). GTP-binding positions include 35–42 (GRSNAGKS), 62–66 (GRTQL), 80–83 (DLPG), 147–150 (TKAD), and 180–182 (FSA). Mg(2+) is bound by residues S42 and T64.

The protein belongs to the TRAFAC class TrmE-Era-EngA-EngB-Septin-like GTPase superfamily. EngB GTPase family. Mg(2+) is required as a cofactor.

Functionally, necessary for normal cell division and for the maintenance of normal septation. This is Probable GTP-binding protein EngB from Histophilus somni (strain 129Pt) (Haemophilus somnus).